The sequence spans 586 residues: Heterogeneous nuclear ribonucleoprotein L (586 aa).

Residues 1 to 16 (MSRRLLPRAEKRRRRL) show a composition bias toward basic residues. Residues 1 to 97 (MSRRLLPRAE…NYDDPHKTPA (97 aa)) form a disordered region. Over residues 17–27 (EQRQQPDEQLR) the composition is skewed to basic and acidic residues. Over residues 28–37 (RAGAMVKMAA) the composition is skewed to low complexity. Residues 38 to 54 (AGGGGGGGRYYGGGNEG) are compositionally biased toward gly residues. Residues lysine 59 and lysine 62 each participate in a glycyl lysine isopeptide (Lys-Gly) (interchain with G-Cter in SUMO2) cross-link. A compositionally biased stretch (gly residues) spans 69–87 (QHGGGGGGGSGAAGGGGGE). Serine 98 carries the post-translational modification Phosphoserine. The 75-residue stretch at 99–173 (PVVHIRGLID…HPAFVNYSTS (75 aa)) folds into the RRM 1 domain. A Glycyl lysine isopeptide (Lys-Gly) (interchain with G-Cter in SUMO2) cross-link involves residue lysine 133. Serine 182 bears the Phosphoserine mark. The region spanning 190 to 267 (SVLLFTILNP…CTLKIEYAKP (78 aa)) is the RRM 2 domain. At lysine 266 the chain carries N6-acetyllysine. A compositionally biased stretch (polar residues) spans 281-298 (DYTNPNLSGQGDPGSNPN). A disordered region spans residues 281–376 (DYTNPNLSGQ…PPPPDYGPHA (96 aa)). Phosphoserine occurs at positions 288 and 295. Lysine 299 is covalently cross-linked (Glycyl lysine isopeptide (Lys-Gly) (interchain with G-Cter in SUMO2)). An asymmetric dimethylarginine mark is found at arginine 351 and arginine 355. The segment covering 361 to 372 (GHPPPPPPPPDY) has biased composition (pro residues). Serine 378 bears the Phosphoserine mark. 2 consecutive RRM domains span residues 379-476 (PVLM…DFSE) and 492-580 (RIQH…LCFS). Serine 541 carries the post-translational modification Phosphoserine; by CaMK4. Lysine 565 participates in a covalent cross-link: Glycyl lysine isopeptide (Lys-Gly) (interchain with G-Cter in SUMO2).

As to quaternary structure, identified in a IGF2BP1-dependent mRNP granule complex containing untranslated mRNAs. Interacts with HNRNPLL. Interacts with APEX1; the interaction is DNA-dependent. Component of a complex with SETD2. Interacts with ELAVL1. Part of a transcription inhibitory ribonucleoprotein complex composed at least of the circular RNA circZNF827, ZNF827 and HNRNPK. Interacts with CHD8 in an RNA-dependent manner. Post-translationally, phosphorylation at Ser-541 by CaMK4 enhances interaction with a CaMK4-responsive RNA element (CaRRE1), and prevents inclusion of the stress axis-regulated exon (STREX) of the KCNMA1 potassium channel transcripts upon membrane depolarization. As to expression, detected in hematopoietic cells, including lymphoid progenitor cells.

The protein localises to the nucleus. The protein resides in the nucleoplasm. It localises to the cytoplasm. In terms of biological role, splicing factor binding to exonic or intronic sites and acting as either an activator or repressor of exon inclusion. Exhibits a binding preference for CA-rich elements. Component of the heterogeneous nuclear ribonucleoprotein (hnRNP) complexes and associated with most nascent transcripts. Associates, together with APEX1, to the negative calcium responsive element (nCaRE) B2 of the APEX2 promoter. As part of a ribonucleoprotein complex composed at least of ZNF827, HNRNPK and the circular RNA circZNF827 that nucleates the complex on chromatin, may negatively regulate the transcription of genes involved in neuronal differentiation. Regulates alternative splicing of a core group of genes involved in neuronal differentiation, likely by mediating H3K36me3-coupled transcription elongation and co-transcriptional RNA processing via interaction with CHD8. This Mus musculus (Mouse) protein is Heterogeneous nuclear ribonucleoprotein L (Hnrnpl).